The following is a 445-amino-acid chain: Tubulin beta-4 chain (445 aa).

8 residues coordinate GTP: Q11, E69, S138, G142, T143, G144, N204, and N226. Position 69 (E69) interacts with Mg(2+). Residues 421–445 are disordered; the sequence is EYQQYQDATADEEYDEEEEEERDAE. Residues 429–445 are compositionally biased toward acidic residues; that stretch reads TADEEYDEEEEEERDAE.

Belongs to the tubulin family. Dimer of alpha and beta chains. A typical microtubule is a hollow water-filled tube with an outer diameter of 25 nm and an inner diameter of 15 nM. Alpha-beta heterodimers associate head-to-tail to form protofilaments running lengthwise along the microtubule wall with the beta-tubulin subunit facing the microtubule plus end conferring a structural polarity. Microtubules usually have 13 protofilaments but different protofilament numbers can be found in some organisms and specialized cells. Mg(2+) serves as cofactor.

The protein localises to the cytoplasm. The protein resides in the cytoskeleton. In terms of biological role, tubulin is the major constituent of microtubules, a cylinder consisting of laterally associated linear protofilaments composed of alpha- and beta-tubulin heterodimers. Microtubules grow by the addition of GTP-tubulin dimers to the microtubule end, where a stabilizing cap forms. Below the cap, tubulin dimers are in GDP-bound state, owing to GTPase activity of alpha-tubulin. This Triticum aestivum (Wheat) protein is Tubulin beta-4 chain (TUBB4).